A 274-amino-acid polypeptide reads, in one-letter code: Diaminopimelate epimerase (274 aa).

Residues N11, Q44, and N64 each contribute to the substrate site. The Proton donor role is filled by C73. Substrate-binding positions include G74 to N75, N157, N190, and E208 to R209. C217 acts as the Proton acceptor in catalysis. G218 to T219 is a binding site for substrate.

It belongs to the diaminopimelate epimerase family. As to quaternary structure, homodimer.

Its subcellular location is the cytoplasm. It catalyses the reaction (2S,6S)-2,6-diaminopimelate = meso-2,6-diaminopimelate. It participates in amino-acid biosynthesis; L-lysine biosynthesis via DAP pathway; DL-2,6-diaminopimelate from LL-2,6-diaminopimelate: step 1/1. Functionally, catalyzes the stereoinversion of LL-2,6-diaminopimelate (L,L-DAP) to meso-diaminopimelate (meso-DAP), a precursor of L-lysine and an essential component of the bacterial peptidoglycan. The polypeptide is Diaminopimelate epimerase (Blochmanniella pennsylvanica (strain BPEN)).